The sequence spans 82 residues: Small ribosomal subunit protein bS16 (82 aa).

The protein belongs to the bacterial ribosomal protein bS16 family.

This chain is Small ribosomal subunit protein bS16, found in Clostridium botulinum (strain ATCC 19397 / Type A).